The following is a 184-amino-acid chain: ATP synthase subunit delta (184 aa).

The protein belongs to the ATPase delta chain family. In terms of assembly, F-type ATPases have 2 components, F(1) - the catalytic core - and F(0) - the membrane proton channel. F(1) has five subunits: alpha(3), beta(3), gamma(1), delta(1), epsilon(1). F(0) has three main subunits: a(1), b(2) and c(10-14). The alpha and beta chains form an alternating ring which encloses part of the gamma chain. F(1) is attached to F(0) by a central stalk formed by the gamma and epsilon chains, while a peripheral stalk is formed by the delta and b chains.

The protein localises to the cell inner membrane. In terms of biological role, f(1)F(0) ATP synthase produces ATP from ADP in the presence of a proton or sodium gradient. F-type ATPases consist of two structural domains, F(1) containing the extramembraneous catalytic core and F(0) containing the membrane proton channel, linked together by a central stalk and a peripheral stalk. During catalysis, ATP synthesis in the catalytic domain of F(1) is coupled via a rotary mechanism of the central stalk subunits to proton translocation. This protein is part of the stalk that links CF(0) to CF(1). It either transmits conformational changes from CF(0) to CF(1) or is implicated in proton conduction. This Rickettsia peacockii (strain Rustic) protein is ATP synthase subunit delta.